The sequence spans 380 residues: Alcohol dehydrogenase 1 (380 aa).

Zn(2+) is bound by residues Cys-48, Thr-50, His-70, Cys-100, Cys-103, Cys-106, Cys-114, and Cys-178. Residues Thr-50 and His-70 each coordinate an alcohol. Thr-50 is an NAD(+) binding site. Residues 203 to 208 (GLGAVG), Asp-227, Arg-232, Thr-273, Val-296, 296 to 298 (VGV), and Arg-373 contribute to the NAD(+) site.

It belongs to the zinc-containing alcohol dehydrogenase family. In terms of assembly, homodimer. Zn(2+) is required as a cofactor.

The protein localises to the cytoplasm. The enzyme catalyses a primary alcohol + NAD(+) = an aldehyde + NADH + H(+). It catalyses the reaction a secondary alcohol + NAD(+) = a ketone + NADH + H(+). The sequence is that of Alcohol dehydrogenase 1 (ADH1) from Trifolium repens (Creeping white clover).